A 159-amino-acid polypeptide reads, in one-letter code: ATP synthase subunit b 2 (159 aa).

The chain crosses the membrane as a helical span at residues 1-21; it reads MDATFWAFIALVIFVAIVVYM.

The protein belongs to the ATPase B chain family. As to quaternary structure, F-type ATPases have 2 components, F(1) - the catalytic core - and F(0) - the membrane proton channel. F(1) has five subunits: alpha(3), beta(3), gamma(1), delta(1), epsilon(1). F(0) has three main subunits: a(1), b(2) and c(10-14). The alpha and beta chains form an alternating ring which encloses part of the gamma chain. F(1) is attached to F(0) by a central stalk formed by the gamma and epsilon chains, while a peripheral stalk is formed by the delta and b chains.

Its subcellular location is the cell inner membrane. Functionally, f(1)F(0) ATP synthase produces ATP from ADP in the presence of a proton or sodium gradient. F-type ATPases consist of two structural domains, F(1) containing the extramembraneous catalytic core and F(0) containing the membrane proton channel, linked together by a central stalk and a peripheral stalk. During catalysis, ATP synthesis in the catalytic domain of F(1) is coupled via a rotary mechanism of the central stalk subunits to proton translocation. In terms of biological role, component of the F(0) channel, it forms part of the peripheral stalk, linking F(1) to F(0). The sequence is that of ATP synthase subunit b 2 from Brucella suis (strain ATCC 23445 / NCTC 10510).